The following is a 92-amino-acid chain: Long neurotoxin 77 (92 aa).

A signal peptide spans 1-21 (MKTLLLTLVVVTIVCLDLGDS). Cystine bridges form between cysteine 24/cysteine 41, cysteine 34/cysteine 62, cysteine 47/cysteine 51, cysteine 66/cysteine 77, and cysteine 78/cysteine 83.

Belongs to the three-finger toxin family. Long-chain subfamily. Type II alpha-neurotoxin sub-subfamily. Expressed by the venom gland.

The protein localises to the secreted. Binds with high affinity to muscular (alpha-1/CHRNA1) and neuronal (alpha-7/CHRNA7) nicotinic acetylcholine receptor (nAChR) and inhibits acetylcholine from binding to the receptor, thereby impairing neuromuscular and neuronal transmission. This Drysdalia coronoides (White-lipped snake) protein is Long neurotoxin 77.